The chain runs to 144 residues: Large ribosomal subunit protein uL15 (144 aa).

The disordered stretch occupies residues 1–60 (MKMNTLKPAEGSKQSPKRLGRGIGSGLGKTGGRGHKGQTSRSGGTIRPGFEGGQQPLQRR). Residues 21–31 (RGIGSGLGKTG) show a composition bias toward gly residues.

The protein belongs to the universal ribosomal protein uL15 family. As to quaternary structure, part of the 50S ribosomal subunit.

In terms of biological role, binds to the 23S rRNA. The protein is Large ribosomal subunit protein uL15 of Hahella chejuensis (strain KCTC 2396).